Consider the following 89-residue polypeptide: Small ribosomal subunit protein bS20 (89 aa).

The tract at residues 1–28 is disordered; that stretch reads MTLANIKSAKKRAVQSEKSRQHNASQRS.

Belongs to the bacterial ribosomal protein bS20 family.

In terms of biological role, binds directly to 16S ribosomal RNA. This Mannheimia succiniciproducens (strain KCTC 0769BP / MBEL55E) protein is Small ribosomal subunit protein bS20.